The chain runs to 372 residues: MAAPAREPALRCCIRLARVFLLLVLACEVAGSDEAEAREGAASLAGSCGCGTPQRAGAHGSSAAAQRYSREANAPGLTSGPRPLALTKMVPIPAGVFTMGTDDPQIRQDGEAPARRVTVDGFYMDAYEVSNADFEKFVNSTGYLTEAEKFGDSFVFEGMLSEQVKTHIHQAVAAAPWWLPVKGANWRHPEGPDSSILHRSNHPVLHVSWNDAVAYCTWAGKRLPTEAEWEYSCRGGLQNRLFPWGNKLQPKGQHYANIWQGKFPVSNTGEDGFQGTAPVDAFPPNGYGLYNIVGNVWEWTSDWWTVHHSVEETFNPKGPTSGKDRVKKGGSYMCHKSYCYRYRCAARSQNTPDSSASNLGFRCAADHLPTAD.

An N-terminal signal peptide occupies residues 1–31; the sequence is MAAPAREPALRCCIRLARVFLLLVLACEVAG. C48 and C50 are oxidised to a cystine. The segment at 61-80 is disordered; the sequence is SSAAAQRYSREANAPGLTSG. A Ca(2+)-binding site is contributed by E128. N-linked (GlcNAc...) asparagine glycosylation occurs at N139. 2 cysteine pairs are disulfide-bonded: C216/C363 and C233/C344. Ca(2+) is bound by residues N257, I258, D271, F273, N291, G294, and E298. The Cu(2+) site is built by C334 and C339. Residues 339–358 form an interaction with sulfatases region; it reads CYRYRCAARSQNTPDSSASN.

The protein belongs to the sulfatase-modifying factor family. Monomer, homodimer and heterodimer with SUMF2. Cu(2+) is required as a cofactor. N-glycosylated. Contains high-mannose-type oligosaccharides.

The protein localises to the endoplasmic reticulum lumen. It catalyses the reaction L-cysteinyl-[sulfatase] + 2 a thiol + O2 = an organic disulfide + 3-oxo-L-alanyl-[sulfatase] + hydrogen sulfide + H2O + H(+). The protein operates within protein modification; sulfatase oxidation. In terms of biological role, oxidase that catalyzes the conversion of cysteine to 3-oxoalanine on target proteins, using molecular oxygen and an unidentified reducing agent. 3-oxoalanine modification, which is also named formylglycine (fGly), occurs in the maturation of arylsulfatases and some alkaline phosphatases that use the hydrated form of 3-oxoalanine as a catalytic nucleophile. Known substrates include GALNS, ARSA, STS and ARSE. The sequence is that of Formylglycine-generating enzyme from Mus musculus (Mouse).